An 82-amino-acid chain; its full sequence is RNA-binding protein Hfq (82 aa).

Residues 11–71 (DTFLNHVRKT…ISTIMPGAPI (61 aa)) form the Sm domain.

This sequence belongs to the Hfq family. In terms of assembly, homohexamer.

Its function is as follows. RNA chaperone that binds small regulatory RNA (sRNAs) and mRNAs to facilitate mRNA translational regulation in response to envelope stress, environmental stress and changes in metabolite concentrations. Also binds with high specificity to tRNAs. This is RNA-binding protein Hfq from Rhodopseudomonas palustris (strain TIE-1).